A 341-amino-acid chain; its full sequence is Glycerol-3-phosphate dehydrogenase [NAD(P)+] (341 aa).

Positions 14, 15, 35, and 108 each coordinate NADPH. Sn-glycerol 3-phosphate-binding residues include K108 and G136. NADPH is bound at residue A140. Positions 191, 244, 254, 255, and 256 each coordinate sn-glycerol 3-phosphate. Residue K191 is the Proton acceptor of the active site. R255 lines the NADPH pocket. NADPH contacts are provided by V279 and E281.

It belongs to the NAD-dependent glycerol-3-phosphate dehydrogenase family.

The protein resides in the cytoplasm. The enzyme catalyses sn-glycerol 3-phosphate + NAD(+) = dihydroxyacetone phosphate + NADH + H(+). It carries out the reaction sn-glycerol 3-phosphate + NADP(+) = dihydroxyacetone phosphate + NADPH + H(+). The protein operates within membrane lipid metabolism; glycerophospholipid metabolism. In terms of biological role, catalyzes the reduction of the glycolytic intermediate dihydroxyacetone phosphate (DHAP) to sn-glycerol 3-phosphate (G3P), the key precursor for phospholipid synthesis. The protein is Glycerol-3-phosphate dehydrogenase [NAD(P)+] of Pseudomonas fluorescens (strain SBW25).